The following is a 388-amino-acid chain: Succinate--CoA ligase [ADP-forming] subunit beta (388 aa).

In terms of domain architecture, ATP-grasp spans 9 to 245; it reads KELLAGYGLP…KSQENERELK (237 aa). ATP-binding positions include K46, 53–55, E100, Y103, and E108; that span reads GRG. Residues N200 and D214 each contribute to the Mg(2+) site. Substrate-binding positions include N265 and 322-324; that span reads GIV.

Belongs to the succinate/malate CoA ligase beta subunit family. As to quaternary structure, heterotetramer of two alpha and two beta subunits. Requires Mg(2+) as cofactor.

The enzyme catalyses succinate + ATP + CoA = succinyl-CoA + ADP + phosphate. It carries out the reaction GTP + succinate + CoA = succinyl-CoA + GDP + phosphate. It participates in carbohydrate metabolism; tricarboxylic acid cycle; succinate from succinyl-CoA (ligase route): step 1/1. Its function is as follows. Succinyl-CoA synthetase functions in the citric acid cycle (TCA), coupling the hydrolysis of succinyl-CoA to the synthesis of either ATP or GTP and thus represents the only step of substrate-level phosphorylation in the TCA. The beta subunit provides nucleotide specificity of the enzyme and binds the substrate succinate, while the binding sites for coenzyme A and phosphate are found in the alpha subunit. This is Succinate--CoA ligase [ADP-forming] subunit beta from Neisseria meningitidis serogroup C / serotype 2a (strain ATCC 700532 / DSM 15464 / FAM18).